The chain runs to 275 residues: uncharacterized protein (275 aa).

Residues C97, C102, C136, and C140 each contribute to the [4Fe-4S] cluster site. C140 serves as a coordination point for siroheme.

The protein belongs to the nitrite and sulfite reductase 4Fe-4S domain family.

This is an uncharacterized protein from Methanocaldococcus jannaschii (strain ATCC 43067 / DSM 2661 / JAL-1 / JCM 10045 / NBRC 100440) (Methanococcus jannaschii).